A 1612-amino-acid chain; its full sequence is Roundabout homolog 1 (1612 aa).

A signal peptide spans 1-19; the sequence is MIAEPAHFYLFGLICLCSG. Topologically, residues 20–858 are extracellular; it reads SRLRQEDFPP…QQISDVVRQP (839 aa). Ig-like C2-type domains are found at residues 29-125, 131-218, 223-307, 312-407, and 416-502; these read PRIV…ASLE, DDFR…AELT, PSFV…ATLT, PHFV…LEVT, and PVIR…AYIE. An intrachain disulfide couples cysteine 50 to cysteine 108. A glycan (N-linked (GlcNAc...) asparagine) is linked at asparagine 121. 3 disulfides stabilise this stretch: cysteine 152–cysteine 201, cysteine 244–cysteine 291, and cysteine 333–cysteine 389. Residue asparagine 424 is glycosylated (N-linked (GlcNAc...) asparagine). Residues cysteine 437 and cysteine 486 are joined by a disulfide bond. Fibronectin type-III domains follow at residues 524–618, 637–734, and 739–835; these read APSK…TQDV, VVLH…TLEE, and PPRS…LDSH. N-linked (GlcNAc...) asparagine glycosylation is found at asparagine 751, asparagine 781, and asparagine 788. Residues 859–879 form a helical membrane-spanning segment; the sequence is AFIAGIGAACWIILMVFSIWL. The Cytoplasmic portion of the chain corresponds to 880–1612; the sequence is YRHRKKRNGL…NNEELEETES (733 aa). Serine 901 is subject to Phosphoserine. Threonine 909 carries the post-translational modification Phosphothreonine. Tyrosine 999 is subject to Phosphotyrosine. Serine 1016 is subject to Phosphoserine. Position 1034 is a phosphotyrosine (tyrosine 1034). Positions 1045–1068 are disordered; that stretch reads SNNMNNGAGDSSEKHWKPPGQQKP. Tyrosine 1075 is subject to Phosphotyrosine. 3 disordered regions span residues 1088–1298, 1313–1358, and 1381–1612; these read RAND…ADME, EQTP…DGSF, and RRQM…ETES. Over residues 1098–1107 the composition is skewed to polar residues; sequence PYNQSYDQNT. The segment covering 1108–1124 has biased composition (low complexity); the sequence is GGSYNSSDRGSSTSGSQ. Pro residues predominate over residues 1147–1157; it reads LPPPPAHPPPH. Threonine 1201 bears the Phosphothreonine mark. Residues 1216 to 1230 are compositionally biased toward polar residues; that stretch reads YSHQSTATLTPSPQE. Basic and acidic residues predominate over residues 1242-1254; the sequence is DLGHMPHPPDRRR. Pro residues predominate over residues 1257–1268; sequence VSPPPPPRPISP. A Phosphoserine modification is found at serine 1258. Over residues 1283–1297 the composition is skewed to acidic residues; that stretch reads MDTDAPEEEEDEADM. The span at 1345–1358 shows a compositional bias: low complexity; sequence SSGRSSVSSSDGSF. A compositionally biased stretch (polar residues) spans 1399–1412; that stretch reads PRPTSPVSTDSNMS. Over residues 1420 to 1431 the composition is skewed to basic residues; sequence RPAKKQKHQPGH. Residues 1441 to 1451 show a composition bias toward pro residues; that stretch reads LPPPPVPPPAI. Basic and acidic residues-rich tracts occupy residues 1477-1502 and 1510-1534; these read ARTD…RQVT and DPRE…RDLP. Residues 1553 to 1562 are compositionally biased toward polar residues; the sequence is FPTSNNPRDP. Residues 1563–1575 show a composition bias toward low complexity; the sequence is SSSSSMSSRGSGS. Residues 1603-1612 are compositionally biased toward acidic residues; that stretch reads NNEELEETES.

The protein belongs to the immunoglobulin superfamily. ROBO family. As to quaternary structure, homodimer. Dimerization is mediated by the extracellular domain and is independent of SLIT liganding. Interacts with SLIT1 Interacts with SLIT2. Interacts with FLRT3. Interacts with MYO9B (via Rho-GAP domain). Post-translationally, ubiquitinated. May be deubiquitinated by USP33. As to expression, detected in embryonic thalamus neurons (at protein level). Expressed in embryonal spinal cord. Expressed in embryonal lung, and in adult lung bronchial epithelial cells of large proximal airways.

It localises to the cell membrane. The protein localises to the cell projection. It is found in the axon. Its subcellular location is the endoplasmic reticulum-Golgi intermediate compartment membrane. In terms of biological role, receptor for SLIT1 and SLIT2 that mediates cellular responses to molecular guidance cues in cellular migration, including axonal navigation at the ventral midline of the neural tube and projection of axons to different regions during neuronal development. Interaction with the intracellular domain of FLRT3 mediates axon attraction towards cells expressing NTN1. In axon growth cones, the silencing of the attractive effect of NTN1 by SLIT2 may require the formation of a ROBO1-DCC complex. Plays a role in the regulation of cell migration via its interaction with MYO9B; inhibits MYO9B-mediated stimulation of RHOA GTPase activity, and thereby leads to increased levels of active, GTP-bound RHOA. May be required for lung development. This Mus musculus (Mouse) protein is Roundabout homolog 1 (Robo1).